The following is a 425-amino-acid chain: Formyl-CoA:oxalate CoA-transferase (425 aa).

CoA-binding positions include 17–18, Arg-38, 72–75, 96–98, Arg-104, and 136–139; these read QS, LDTK, NFG, and KVYE. Asp-168 (nucleophile) is an active-site residue. Substrate is bound at residue 247 to 249; sequence GGQ.

It belongs to the CoA-transferase III family. Frc subfamily. As to quaternary structure, homodimer.

It catalyses the reaction formyl-CoA + oxalate = oxalyl-CoA + formate. Its pathway is metabolic intermediate degradation; oxalate degradation; CO(2) and formate from oxalate: step 1/2. Its function is as follows. Involved in the catabolism of oxalate and in the adapatation to low pH via the induction of the oxalate-dependent acid tolerance response (ATR). Catalyzes the transfer of the CoA moiety from formyl-CoA to oxalate. In Rhodopseudomonas palustris (strain TIE-1), this protein is Formyl-CoA:oxalate CoA-transferase.